The sequence spans 217 residues: Photosynthetic NDH subunit of lumenal location 4, chloroplastic (217 aa).

The N-terminal 34 residues, 1–34 (MAISTLTLTQSLYTRSFRPTIFFSSSSSSSFSCL), are a transit peptide targeting the chloroplast. Cystine bridges form between Cys87-Cys99 and Cys188-Cys193. The PPIase FKBP-type domain occupies 112-211 (GVLVNIHYTA…LYDINFVEIY (100 aa)).

The protein belongs to the FKBP-type PPIase family. In terms of assembly, part of the chloroplast NDH complex, composed of a mixture of chloroplast and nucleus encoded subunits. Component of the NDH lumenal subcomplex, at least composed of PnsL1, PnsL2, PnsL3, PnsL4 and PnsL5.

It localises to the plastid. Its subcellular location is the chloroplast thylakoid lumen. The enzyme catalyses [protein]-peptidylproline (omega=180) = [protein]-peptidylproline (omega=0). NDH shuttles electrons from NAD(P)H:plastoquinone, via FMN and iron-sulfur (Fe-S) centers, to quinones in the photosynthetic chain and possibly in a chloroplast respiratory chain. The immediate electron acceptor for the enzyme in this species is believed to be plastoquinone. Couples the redox reaction to proton translocation, and thus conserves the redox energy in a proton gradient. PPIases accelerate the folding of proteins. It catalyzes the cis-trans isomerization of proline imidic peptide bonds in oligopeptides. Seems to be essential for stabilizing the NDH subcomplex A. This is Photosynthetic NDH subunit of lumenal location 4, chloroplastic from Arabidopsis thaliana (Mouse-ear cress).